Consider the following 331-residue polypeptide: MGPAPESSEFVHRTWVQCENESCLKWRLLSPAAAAAVNPSEPWYCFMNTDPSYSSCSVSEEDFPEESQFLENGYKFVYSQLPLGSLVLVKLRNWPSWPGILCPDPFKGKYVTYDQDGNVEKYYVEFLGDPHSTAWMSAAFVGHFSLTLEAADCTKKKRWYRSALEEAYQLYRCSAEQRLEVCCLSKPNRAKTDTKAAVVTKKGMQVSKINTEKKRPRVRKRKRDAALKCSVEIFCSDEALSKENMVVSETEGLLKELEKMLQQIQEPTAREDESQGEQLSQCSPESPTGSPFQSYHEEDYIVPDGAGLKAGEYIEIITNNLKKIDALISEF.

Residues 9–64 (EFVHRTWVQCENESCLKWRLLSPAAAAAVNPSEPWYCFMNTDPSYSSCSVSEEDFP) form a CW-type zinc finger. Zn(2+) is bound by residues Cys18, Cys23, Cys45, and Cys56. The 65-residue stretch at 83–147 (LGSLVLVKLR…AAFVGHFSLT (65 aa)) folds into the PWWP domain. The segment at 264–295 (IQEPTAREDESQGEQLSQCSPESPTGSPFQSY) is disordered. Residues 276-293 (GEQLSQCSPESPTGSPFQ) are compositionally biased toward polar residues.

Functionally, histone methylation reader which binds to non-methylated (H3K4me0), monomethylated (H3K4me1), dimethylated (H3K4me2) and trimethylated (H3K4me3) 'Lys-4' on histone H3. The order of binding preference is H3K4me3 &gt; H3K4me2 &gt; H3K4me1 &gt; H3K4me0. The chain is Zinc finger CW-type PWWP domain protein 2 homolog (Zcwpw2) from Mus musculus (Mouse).